We begin with the raw amino-acid sequence, 480 residues long: MGIKGLTKFIADTAPNAIKEIKIENLMGRVVAIDASMSLYQFIIAIRDGDQYGNLMNESGETTSHISGLMSRTIKLMENGLKPIYVFDGAPPELKGSELEKRGEKRQKAEELLIKAKAEGNLEEIKKQSGRTVRVTKKQNEEAKKLLTLMGIPVIESPCEAEAQCAFLTKYEMAHATATEDADALVFGTKILIRNLNANASSNKNKNKNSSKRGYILTEINLEQVLKGLKLTMDEFIDFCILCGCDYCDTIKGIGSKTAYNLIKEYNCIENIIKNIDQNKYQVPANFKYVEARQSFINPKVLEKSEVKIDWCEPKIEELKTFLIKEHNFNEVRVTNYITRLLKARKVTTQRRLDTFFTTCTKKSTKLIIEESQKEVLKTKGKGKKREINNDSSTKLNAKKKKTNVKDEKKNNEKVDELKNKSDENLVKDEEDDQDDYDQNIFDEKTNSESGNIKNENVKEDVSSNDITMDIPKCTNDIVC.

The interval 1 to 106 (MGIKGLTKFI…SELEKRGEKR (106 aa)) is N-domain. Aspartate 34 contacts Mg(2+). The DNA site is built by arginine 47 and arginine 72. Mg(2+) is bound by residues aspartate 88, glutamate 160, glutamate 162, aspartate 181, and aspartate 183. Residues 124–266 (EIKKQSGRTV…KTAYNLIKEY (143 aa)) form an I-domain region. DNA is bound at residue glutamate 160. DNA is bound by residues glycine 244 and aspartate 246. Aspartate 246 lines the Mg(2+) pocket. Residues 349-357 (TQRRLDTFF) are interaction with PCNA. The segment at 379–461 (TKGKGKKREI…NIKNENVKED (83 aa)) is disordered. The segment covering 404 to 428 (NVKDEKKNNEKVDELKNKSDENLVK) has biased composition (basic and acidic residues). The segment covering 429 to 438 (DEEDDQDDYD) has biased composition (acidic residues).

It belongs to the XPG/RAD2 endonuclease family. FEN1 subfamily. As to quaternary structure, interacts with PCNA. Three molecules of FEN1 bind to one PCNA trimer with each molecule binding to one PCNA monomer. PCNA stimulates the nuclease activity without altering cleavage specificity. The cofactor is Mg(2+). In terms of processing, phosphorylated. Phosphorylation upon DNA damage induces relocalization to the nuclear plasma.

It is found in the nucleus. Its subcellular location is the nucleolus. The protein localises to the nucleoplasm. It localises to the mitochondrion. With respect to regulation, inhibited by monovalent metal ions. In terms of biological role, structure-specific nuclease with 5'-flap endonuclease and 5'-3' exonuclease activities involved in DNA replication and repair. During DNA replication, cleaves the 5'-overhanging flap structure that is generated by displacement synthesis when DNA polymerase encounters the 5'-end of a downstream Okazaki fragment. It enters the flap from the 5'-end and then tracks to cleave the flap base, leaving a nick for ligation. Also involved in the long patch base excision repair (LP-BER) pathway, by cleaving within the apurinic/apyrimidinic (AP) site-terminated flap. Acts as a genome stabilization factor that prevents flaps from equilibrating into structures that lead to duplications and deletions. Also possesses 5'-3' exonuclease activity on nicked or gapped double-stranded DNA, and exhibits RNase H activity. Also involved in replication and repair of rDNA and in repairing mitochondrial DNA. This chain is Flap endonuclease 1, found in Plasmodium yoelii yoelii.